We begin with the raw amino-acid sequence, 263 residues long: Probable methylthioribulose-1-phosphate dehydratase (263 aa).

Residue Cys102 coordinates substrate. Zn(2+) contacts are provided by His120 and His122. Glu144 functions as the Proton donor/acceptor in the catalytic mechanism. His200 contributes to the Zn(2+) binding site.

This sequence belongs to the aldolase class II family. MtnB subfamily. Requires Zn(2+) as cofactor.

It is found in the cytoplasm. It catalyses the reaction 5-(methylsulfanyl)-D-ribulose 1-phosphate = 5-methylsulfanyl-2,3-dioxopentyl phosphate + H2O. It participates in amino-acid biosynthesis; L-methionine biosynthesis via salvage pathway; L-methionine from S-methyl-5-thio-alpha-D-ribose 1-phosphate: step 2/6. Catalyzes the dehydration of methylthioribulose-1-phosphate (MTRu-1-P) into 2,3-diketo-5-methylthiopentyl-1-phosphate (DK-MTP-1-P). The polypeptide is Probable methylthioribulose-1-phosphate dehydratase (Caenorhabditis elegans).